We begin with the raw amino-acid sequence, 378 residues long: Secreted LysM effector ldpA (378 aa).

The first 19 residues, 1–19 (MMKSIRFLASALALCLVDA), serve as a signal peptide directing secretion. Residues 118–131 (WTPPTTTTRSTSSS) show a composition bias toward low complexity. The disordered stretch occupies residues 118 to 139 (WTPPTTTTRSTSSSAGNGVTTP). Residues 152 to 198 (RFYLVVSGDSCYDIAAAQGISLDNFYTWNPAVGSSCGGLWPDYYVCV) form the LysM 1 domain. Residues 208–230 (TTTTTTTPTTTSTTTTTAGNGVT) are disordered. LysM domains are found at residues 245–291 (KFYQ…YVCV) and 330–376 (KFYL…YVCV).

Belongs to the secreted LysM effector family.

It is found in the secreted. The protein resides in the cell wall. Its subcellular location is the extracellular space. The protein localises to the extracellular matrix. In terms of biological role, cell wall chitin of A.fumigatus recruits lung eosinophils during infection and ldpA might have a role in sequestration of chitin and act as triggers of host immunity to dampen host defense. The sequence is that of Secreted LysM effector ldpA from Aspergillus fumigatus (strain ATCC MYA-4609 / CBS 101355 / FGSC A1100 / Af293) (Neosartorya fumigata).